Here is a 490-residue protein sequence, read N- to C-terminus: ATP synthase subunit beta, chloroplastic (490 aa).

An ATP-binding site is contributed by 170–177; that stretch reads GGAGVGKT.

The protein belongs to the ATPase alpha/beta chains family. F-type ATPases have 2 components, CF(1) - the catalytic core - and CF(0) - the membrane proton channel. CF(1) has five subunits: alpha(3), beta(3), gamma(1), delta(1), epsilon(1). CF(0) has four main subunits: a(1), b(1), b'(1) and c(9-12).

Its subcellular location is the plastid. The protein resides in the chloroplast thylakoid membrane. It catalyses the reaction ATP + H2O + 4 H(+)(in) = ADP + phosphate + 5 H(+)(out). In terms of biological role, produces ATP from ADP in the presence of a proton gradient across the membrane. The catalytic sites are hosted primarily by the beta subunits. The polypeptide is ATP synthase subunit beta, chloroplastic (Ipomoea obscura (Obscure morning glory)).